The chain runs to 355 residues: Natterin-1 (355 aa).

A signal peptide spans 1–18; the sequence is MIPSVLLVTLLLLSWTSA. Residues 19–27 constitute a propeptide that is removed on maturation; sequence EKDLKVRVA.

This sequence belongs to the natterin family. Post-translationally, contains 4 disulfide bonds. Expressed by the venom gland.

It is found in the secreted. With respect to regulation, inhibited by tissue-kallikrein inhibitor TKI and trasylol. Plasma kallikrein inhibitor PKSI527 and classical inhibitors of serine-, metallo-, thiol- or aspartate-peptidases evokes a minor inhibition of the peptide digestion. In terms of biological role, shows nociceptive, edema-inducing and kininogenase activity with release of kallidin from low molecular weight kininogen. The cleavage occurs at Met-Lys bonds. This is Natterin-1 from Thalassophryne nattereri (Copper Joe toadfish).